Here is a 451-residue protein sequence, read N- to C-terminus: Methionine aminopeptidase 2-2 (451 aa).

The segment at 1 to 101 (MAAKVADDVA…IDEVFPNDSY (101 aa)) is disordered. A compositionally biased stretch (acidic residues) spans 37–51 (EHEDSDDDNEAEEGA). Over residues 60 to 73 (KKKKKRKPRKKKKA) the composition is skewed to basic residues. Histidine 204 contributes to the substrate binding site. 3 residues coordinate a divalent metal cation: aspartate 224, aspartate 235, and histidine 304. Substrate is bound at residue histidine 312. Glutamate 337 and glutamate 432 together coordinate a divalent metal cation.

This sequence belongs to the peptidase M24A family. Methionine aminopeptidase eukaryotic type 2 subfamily. It depends on Co(2+) as a cofactor. Requires Zn(2+) as cofactor. Mn(2+) serves as cofactor. The cofactor is Fe(2+).

Its subcellular location is the cytoplasm. The enzyme catalyses Release of N-terminal amino acids, preferentially methionine, from peptides and arylamides.. Cotranslationally removes the N-terminal methionine from nascent proteins. The N-terminal methionine is often cleaved when the second residue in the primary sequence is small and uncharged (Met-Ala-, Cys, Gly, Pro, Ser, Thr, or Val). The sequence is that of Methionine aminopeptidase 2-2 from Pyrenophora tritici-repentis (strain Pt-1C-BFP) (Wheat tan spot fungus).